The sequence spans 282 residues: tRNA U34 carboxymethyltransferase (282 aa).

Residues K54, W68, K73, G92, 114–116 (DPS), Y161, and R276 contribute to the carboxy-S-adenosyl-L-methionine site.

This sequence belongs to the class I-like SAM-binding methyltransferase superfamily. CmoB family. As to quaternary structure, homotetramer.

It carries out the reaction carboxy-S-adenosyl-L-methionine + 5-hydroxyuridine(34) in tRNA = 5-carboxymethoxyuridine(34) in tRNA + S-adenosyl-L-homocysteine + H(+). Functionally, catalyzes carboxymethyl transfer from carboxy-S-adenosyl-L-methionine (Cx-SAM) to 5-hydroxyuridine (ho5U) to form 5-carboxymethoxyuridine (cmo5U) at position 34 in tRNAs. The chain is tRNA U34 carboxymethyltransferase from Campylobacter fetus subsp. fetus (strain 82-40).